Here is a 381-residue protein sequence, read N- to C-terminus: Dihydroorotate dehydrogenase (quinone) (381 aa).

FMN is bound by residues 77–81 and A101; that span reads AGCDK. Position 81 (K81) interacts with substrate. 126–129 contacts substrate; it reads NRLG. FMN-binding residues include N158 and N191. N191 is a substrate binding site. Catalysis depends on S194, which acts as the Nucleophile. N196 is a binding site for substrate. Residues K229 and T257 each contribute to the FMN site. Residue 258-259 coordinates substrate; that stretch reads NT. FMN is bound by residues G287, G316, and 337-338; that span reads YT.

It belongs to the dihydroorotate dehydrogenase family. Type 2 subfamily. In terms of assembly, monomer. Requires FMN as cofactor.

It is found in the cell membrane. It catalyses the reaction (S)-dihydroorotate + a quinone = orotate + a quinol. Its pathway is pyrimidine metabolism; UMP biosynthesis via de novo pathway; orotate from (S)-dihydroorotate (quinone route): step 1/1. Catalyzes the conversion of dihydroorotate to orotate with quinone as electron acceptor. This Synechocystis sp. (strain ATCC 27184 / PCC 6803 / Kazusa) protein is Dihydroorotate dehydrogenase (quinone) (pyrD).